The sequence spans 356 residues: MKKSDFHYDLPDELIAQAPLAERAASRLLVVPPSPQALADRQVRDLPELLQPGDLLIFNDTRVIPARLFGQKASGGRVEILIERLLGERQARVQIGASKSPKAGSLIALDAGGQAEVLGRDGEFYLLRFEIPTPLEHWLLEAGRLPLPPYIRREPGVEDRERYQTVFAREVGAVAAPTAGLHFDEPLLARLRERGVEFGHVTLHVGAGTFQPVRVDKLDQHVMHKEWLNVGAALVEQVRRTRARGGRVIAVGTTVVRSLESAWRKTEAAPEGELQPFAGETQIFILPGYRIRSVDAMVTNFHLPESTLMMMVSAFAGRERIFAAYHHAIAQRYRFFSYGDAMLLWGRESGLGNGES.

It belongs to the QueA family. Monomer.

It is found in the cytoplasm. The enzyme catalyses 7-aminomethyl-7-carbaguanosine(34) in tRNA + S-adenosyl-L-methionine = epoxyqueuosine(34) in tRNA + adenine + L-methionine + 2 H(+). It functions in the pathway tRNA modification; tRNA-queuosine biosynthesis. Its function is as follows. Transfers and isomerizes the ribose moiety from AdoMet to the 7-aminomethyl group of 7-deazaguanine (preQ1-tRNA) to give epoxyqueuosine (oQ-tRNA). This Xanthomonas axonopodis pv. citri (strain 306) protein is S-adenosylmethionine:tRNA ribosyltransferase-isomerase.